Here is a 702-residue protein sequence, read N- to C-terminus: Arylphorin (702 aa).

An N-terminal signal peptide occupies residues 1–16; it reads MQTVLFLAALVSLAAA. Asparagine 211 and asparagine 481 each carry an N-linked (GlcNAc...) asparagine glycan.

The protein belongs to the hemocyanin family. Hemolymph.

It is found in the secreted. In terms of biological role, larval storage protein (LSP) which may serve as a store of amino acids for synthesis of adult proteins. Binds the A.niger cell wall component alpha-1,3-glucan, a fungal pathogen-associated molecular pattern (PAMP) that activates the host immune response. This Galleria mellonella (Greater wax moth) protein is Arylphorin (LOC113516268).